The chain runs to 1283 residues: 5-oxoprolinase PfmaA (1283 aa).

The interval 1256 to 1283 (NTPGGGAWGKPEGDADGYREEDQAGDGI) is disordered. Basic and acidic residues predominate over residues 1266 to 1277 (PEGDADGYREED).

Belongs to the oxoprolinase family. In terms of assembly, homodimer.

It catalyses the reaction 5-oxo-L-proline + ATP + 2 H2O = L-glutamate + ADP + phosphate + H(+). 5-oxoprolinase; part of the gene cluster that mediates the biosynthesis of dihydroxynaphthalene (DHN)-melanin, a bluish-green pigment forming a dark layer in the conidial wall that protects the conidia from UV radiations. The first step of the pathway is the production of the pentaketide 1,3,6,8-tetrahydroxynaphthalene (1,3,6,8-THN or T4HN) by the polyketide synthase PfmaE though condensation of acetyl-CoA with malonyl-CoA. T4HN is not stable and easily oxidizes into the stable form flaviolin. T4HN is also substrate of the hydroxynaphthalene reductase PfmaG to yield scytalone. The scytalone dehydratase PfmaJ then reduces scytalone to 1,3,8-THN. 1,3,8-THN is then substrate of the hydroxynaphthalene reductase PfmaI to yield vermelone. Vermelone is further converted by the multicopper oxidase PfmaD to 1,8-DHN. Finally the laccase PFICI_06862 transforms 1,8-DHN to DHN-melanin. The roles of the 5-oxoprolinase PfmaA and the proline iminopeptidase PfmaB within the cluster have not been elucidated yet. The chain is 5-oxoprolinase PfmaA from Pestalotiopsis fici (strain W106-1 / CGMCC3.15140).